The sequence spans 216 residues: Adenylate kinase (216 aa).

An ATP-binding site is contributed by 10 to 15 (GSGKGT). The interval 30–59 (STGEILRKEIKKNKKTKKYIKKTINKGKLI) is NMP. AMP-binding positions include threonine 31, arginine 36, 57–59 (KLI), 85–88 (GFPR), and glutamine 92. An LID region spans residues 121–158 (GRLIHASSGRTYHKIFNPPKIKNKDDITQEKLCSRNDD). Residues arginine 122 and 131–132 (TY) each bind ATP. Positions 155 and 166 each coordinate AMP. Glutamine 196 contacts ATP.

The protein belongs to the adenylate kinase family. Monomer.

It is found in the cytoplasm. It carries out the reaction AMP + ATP = 2 ADP. It functions in the pathway purine metabolism; AMP biosynthesis via salvage pathway; AMP from ADP: step 1/1. Catalyzes the reversible transfer of the terminal phosphate group between ATP and AMP. Plays an important role in cellular energy homeostasis and in adenine nucleotide metabolism. The chain is Adenylate kinase from Buchnera aphidicola subsp. Cinara cedri (strain Cc).